The primary structure comprises 159 residues: 6,7-dimethyl-8-ribityllumazine synthase (159 aa).

5-amino-6-(D-ribitylamino)uracil contacts are provided by residues W27, 62 to 64 (SWE), and 86 to 88 (VLI). 91 to 92 (ST) contributes to the (2S)-2-hydroxy-3-oxobutyl phosphate binding site. H94 (proton donor) is an active-site residue. Residue L119 coordinates 5-amino-6-(D-ribitylamino)uracil. R133 is a (2S)-2-hydroxy-3-oxobutyl phosphate binding site.

Homopentamer.

The catalysed reaction is (2S)-2-hydroxy-3-oxobutyl phosphate + 5-amino-6-(D-ribitylamino)uracil = 6,7-dimethyl-8-(1-D-ribityl)lumazine + phosphate + 2 H2O + H(+). Its pathway is cofactor biosynthesis; riboflavin biosynthesis; riboflavin from 2-hydroxy-3-oxobutyl phosphate and 5-amino-6-(D-ribitylamino)uracil: step 1/2. With respect to regulation, competitively inhibited by riboflavin (Ki of 17 uM). Its function is as follows. Catalyzes the formation of 6,7-dimethyl-8-ribityllumazine by condensation of 5-amino-6-(D-ribitylamino)uracil with 3,4-dihydroxy-2-butanone 4-phosphate. This is the penultimate step in the biosynthesis of riboflavin. Also binds riboflavin with an unexpected high affinity. This is 6,7-dimethyl-8-ribityllumazine synthase (rib4) from Schizosaccharomyces pombe (strain 972 / ATCC 24843) (Fission yeast).